A 27-amino-acid chain; its full sequence is Cupiennin-4b (27 aa).

Position 27 is a glutamine amide (Gln-27).

As to expression, expressed by the venom gland.

It is found in the secreted. This is Cupiennin-4b from Cupiennius salei (American wandering spider).